A 241-amino-acid polypeptide reads, in one-letter code: 2-C-methyl-D-erythritol 4-phosphate cytidylyltransferase (241 aa).

This sequence belongs to the IspD/TarI cytidylyltransferase family. IspD subfamily.

The catalysed reaction is 2-C-methyl-D-erythritol 4-phosphate + CTP + H(+) = 4-CDP-2-C-methyl-D-erythritol + diphosphate. It functions in the pathway isoprenoid biosynthesis; isopentenyl diphosphate biosynthesis via DXP pathway; isopentenyl diphosphate from 1-deoxy-D-xylulose 5-phosphate: step 2/6. In terms of biological role, catalyzes the formation of 4-diphosphocytidyl-2-C-methyl-D-erythritol from CTP and 2-C-methyl-D-erythritol 4-phosphate (MEP). This Shewanella denitrificans (strain OS217 / ATCC BAA-1090 / DSM 15013) protein is 2-C-methyl-D-erythritol 4-phosphate cytidylyltransferase.